Consider the following 102-residue polypeptide: UPF0213 protein XAC3202 (102 aa).

The GIY-YIG domain occupies 5-80; sequence KPWHLYLLLC…KRLPRARKLA (76 aa).

The protein belongs to the UPF0213 family.

This is UPF0213 protein XAC3202 from Xanthomonas axonopodis pv. citri (strain 306).